A 338-amino-acid chain; its full sequence is Holliday junction branch migration complex subunit RuvB (338 aa).

The segment at 1–180 (MERLLDNKFS…FGIIERLDYY (180 aa)) is large ATPase domain (RuvB-L). ATP contacts are provided by L19, R20, G61, K64, T65, T66, R170, Y180, and R217. T65 is a binding site for Mg(2+). A small ATPAse domain (RuvB-S) region spans residues 181–251 (TVEELSQIVM…VAKSGLEMFE (71 aa)). A head domain (RuvB-H) region spans residues 254–338 (EYGLDLVDRN…FKLKESGDNR (85 aa)). DNA contacts are provided by K309 and R314.

This sequence belongs to the RuvB family. As to quaternary structure, homohexamer. Forms an RuvA(8)-RuvB(12)-Holliday junction (HJ) complex. HJ DNA is sandwiched between 2 RuvA tetramers; dsDNA enters through RuvA and exits via RuvB. An RuvB hexamer assembles on each DNA strand where it exits the tetramer. Each RuvB hexamer is contacted by two RuvA subunits (via domain III) on 2 adjacent RuvB subunits; this complex drives branch migration. In the full resolvosome a probable DNA-RuvA(4)-RuvB(12)-RuvC(2) complex forms which resolves the HJ.

The protein resides in the cytoplasm. It carries out the reaction ATP + H2O = ADP + phosphate + H(+). The RuvA-RuvB-RuvC complex processes Holliday junction (HJ) DNA during genetic recombination and DNA repair, while the RuvA-RuvB complex plays an important role in the rescue of blocked DNA replication forks via replication fork reversal (RFR). RuvA specifically binds to HJ cruciform DNA, conferring on it an open structure. The RuvB hexamer acts as an ATP-dependent pump, pulling dsDNA into and through the RuvAB complex. RuvB forms 2 homohexamers on either side of HJ DNA bound by 1 or 2 RuvA tetramers; 4 subunits per hexamer contact DNA at a time. Coordinated motions by a converter formed by DNA-disengaged RuvB subunits stimulates ATP hydrolysis and nucleotide exchange. Immobilization of the converter enables RuvB to convert the ATP-contained energy into a lever motion, pulling 2 nucleotides of DNA out of the RuvA tetramer per ATP hydrolyzed, thus driving DNA branch migration. The RuvB motors rotate together with the DNA substrate, which together with the progressing nucleotide cycle form the mechanistic basis for DNA recombination by continuous HJ branch migration. Branch migration allows RuvC to scan DNA until it finds its consensus sequence, where it cleaves and resolves cruciform DNA. This is Holliday junction branch migration complex subunit RuvB from Caldicellulosiruptor bescii (strain ATCC BAA-1888 / DSM 6725 / KCTC 15123 / Z-1320) (Anaerocellum thermophilum).